Reading from the N-terminus, the 123-residue chain is Protein Wnt-7a (123 aa).

Residue Ser1 is the site of O-palmitoleoyl serine; by PORCN attachment. The disordered linker stretch occupies residues 33–61 (VEPVRTHRNKRPVFLKIKKPLSYRKPMVT). A disulfide bridge connects residues Cys89 and Cys104. 2 N-linked (GlcNAc...) asparagine glycosylation sites follow: Asn90 and Asn96.

The protein belongs to the Wnt family. As to quaternary structure, forms a soluble 1:1 complex with AFM; this prevents oligomerization and is required for prolonged biological activity. The complex with AFM may represent the physiological form in body fluids. Interacts with FZD5. Interacts with PORCN. Palmitoleoylation is required for efficient binding to frizzled receptors. Depalmitoleoylation leads to Wnt signaling pathway inhibition.

It is found in the secreted. Its subcellular location is the extracellular space. The protein resides in the extracellular matrix. In terms of biological role, ligand for members of the frizzled family of seven transmembrane receptors that functions in the canonical Wnt/beta-catenin signaling pathway. Plays an important role in embryonic development, including dorsal versus ventral patterning during limb development, skeleton development and urogenital tract development. Required for central nervous system (CNS) angiogenesis and blood-brain barrier regulation. This Alopias vulpinus (Common thresher shark) protein is Protein Wnt-7a (WNT-7A).